Reading from the N-terminus, the 103-residue chain is Small ribosomal subunit protein uS14c (103 aa).

This sequence belongs to the universal ribosomal protein uS14 family. As to quaternary structure, part of the 30S ribosomal subunit.

Its subcellular location is the plastid. It localises to the chloroplast. Its function is as follows. Binds 16S rRNA, required for the assembly of 30S particles. In Lolium perenne (Perennial ryegrass), this protein is Small ribosomal subunit protein uS14c.